A 157-amino-acid chain; its full sequence is MPKLSQDEIDDLKDVFELFDFWDGRDGAVDAFKLGDVCRCLGINPRNEDVFAVGGTHKMGEKSLPFEEFLPAYEGLMDCEQGTFADYMEAFKTFDREGQGFISGAELRHVLTALGERLSDEDVDEIIKLTDLQEDLEGNVKYEDFVKKVMAGPYPDK.

EF-hand domains lie at 7–44 and 82–117; these read DEID…LGIN and GTFA…LGER.

In molluscan muscle, calcium regulation is associated with myosin rather than with actin. Muscle myosin contains two types of light chains: the catalytic light chain, essential for ATPase activity, and the regulatory light chain, a calcium-binding protein responsible for Ca(2+) dependent binding and Ca(2+) dependent Mg-ATPase activity. This Argopecten irradians (Bay scallop) protein is Myosin essential light chain, striated adductor muscle.